A 234-amino-acid chain; its full sequence is tRNA (guanine-N(1)-)-methyltransferase (234 aa).

Residues Gly-115 and 135 to 140 (VGDYIL) contribute to the S-adenosyl-L-methionine site.

Belongs to the RNA methyltransferase TrmD family. As to quaternary structure, homodimer.

Its subcellular location is the cytoplasm. The enzyme catalyses guanosine(37) in tRNA + S-adenosyl-L-methionine = N(1)-methylguanosine(37) in tRNA + S-adenosyl-L-homocysteine + H(+). Its function is as follows. Specifically methylates guanosine-37 in various tRNAs. The protein is tRNA (guanine-N(1)-)-methyltransferase of Rickettsia akari (strain Hartford).